A 25-amino-acid polypeptide reads, in one-letter code: Kappa-conotoxin RIIIJ (25 aa).

A 4-hydroxyproline mark is found at P2, P3, P7, P8, P13, P15, and P21. 3 disulfides stabilise this stretch: C4–C17, C5–C22, and C12–C23.

This sequence belongs to the conotoxin M superfamily. As to expression, expressed by the venom duct.

The protein resides in the secreted. Its function is as follows. Kappa-conotoxins inhibits voltage-gated potassium channels. This toxin dose-dependently and reversibly inhibits the Kv1.2/KCNA2 channel in mammalia. Does not exert protective effect on cardiac tissue when administered after an ischemic event. This chain is Kappa-conotoxin RIIIJ, found in Conus radiatus (Rayed cone).